The sequence spans 901 residues: Valine--tRNA ligase (901 aa).

Positions 1 to 37 (MLPGCYTHRLNMSDTQDPPQDESTTDESADALDGEYD) are disordered. The segment covering 19–35 (PQDESTTDESADALDGE) has biased composition (acidic residues). Positions 72–82 (PTVSGNLHMGH) match the 'HIGH' region motif. Residues 572–576 (AMSKS) carry the 'KMSKS' region motif. Position 575 (K575) interacts with ATP.

It belongs to the class-I aminoacyl-tRNA synthetase family. ValS type 2 subfamily.

The protein localises to the cytoplasm. It carries out the reaction tRNA(Val) + L-valine + ATP = L-valyl-tRNA(Val) + AMP + diphosphate. Functionally, catalyzes the attachment of valine to tRNA(Val). As ValRS can inadvertently accommodate and process structurally similar amino acids such as threonine, to avoid such errors, it has a 'posttransfer' editing activity that hydrolyzes mischarged Thr-tRNA(Val) in a tRNA-dependent manner. The sequence is that of Valine--tRNA ligase from Haloarcula marismortui (strain ATCC 43049 / DSM 3752 / JCM 8966 / VKM B-1809) (Halobacterium marismortui).